A 772-amino-acid polypeptide reads, in one-letter code: Probable serine/threonine-protein kinase HAL5-like (772 aa).

Disordered regions lie at residues 1 to 102, 115 to 165, 185 to 241, and 344 to 396; these read MASS…TRHV, RAGT…EPNN, IDTQ…RSNT, and NADE…SANV. Positions 9-19 are enriched in basic and acidic residues; that stretch reads SEPRISRESSL. Composition is skewed to low complexity over residues 20–33 and 41–59; these read KRSL…KGLF and NTGP…ISTP. The span at 66–86 shows a compositional bias: basic and acidic residues; the sequence is TKDKQDRLKNLAANKEKELQT. Positions 146 to 158 are enriched in low complexity; sequence RQSSSNRSSSFSN. Residues 202 to 212 show a composition bias toward basic residues; it reads RRSRSTQRKRL. Residues 454–758 form the Protein kinase domain; the sequence is GKSIGIIGQG…VDSLLKSSWM (305 aa). ATP-binding positions include 460–468 and Lys498; that span reads IGQGAYGVV. The active-site Proton acceptor is the Asp609.

It belongs to the protein kinase superfamily. CAMK Ser/Thr protein kinase family. NPR/HAL subfamily. HAL5 sub-subfamily.

It carries out the reaction L-seryl-[protein] + ATP = O-phospho-L-seryl-[protein] + ADP + H(+). The catalysed reaction is L-threonyl-[protein] + ATP = O-phospho-L-threonyl-[protein] + ADP + H(+). This Kluyveromyces lactis (strain ATCC 8585 / CBS 2359 / DSM 70799 / NBRC 1267 / NRRL Y-1140 / WM37) (Yeast) protein is Probable serine/threonine-protein kinase HAL5-like.